A 555-amino-acid polypeptide reads, in one-letter code: Urocanate hydratase (555 aa).

Residues 52–53 (GG), glutamine 130, 176–178 (GMG), glutamate 196, arginine 201, 242–243 (NA), 263–267 (QTSAH), 272–273 (YL), and tyrosine 321 contribute to the NAD(+) site. Cysteine 409 is a catalytic residue. Glycine 491 provides a ligand contact to NAD(+).

It belongs to the urocanase family. NAD(+) serves as cofactor.

The protein resides in the cytoplasm. It catalyses the reaction 4-imidazolone-5-propanoate = trans-urocanate + H2O. It functions in the pathway amino-acid degradation; L-histidine degradation into L-glutamate; N-formimidoyl-L-glutamate from L-histidine: step 2/3. In terms of biological role, catalyzes the conversion of urocanate to 4-imidazolone-5-propionate. The sequence is that of Urocanate hydratase from Nocardioides sp. (strain ATCC BAA-499 / JS614).